A 565-amino-acid polypeptide reads, in one-letter code: Oxygen-dependent choline dehydrogenase (565 aa).

Aspartate 6–glutamate 35 is a binding site for FAD. Catalysis depends on histidine 475, which acts as the Proton acceptor. Positions arginine 541–alanine 565 are disordered.

It belongs to the GMC oxidoreductase family. It depends on FAD as a cofactor.

It catalyses the reaction choline + A = betaine aldehyde + AH2. The catalysed reaction is betaine aldehyde + NAD(+) + H2O = glycine betaine + NADH + 2 H(+). It functions in the pathway amine and polyamine biosynthesis; betaine biosynthesis via choline pathway; betaine aldehyde from choline (cytochrome c reductase route): step 1/1. Involved in the biosynthesis of the osmoprotectant glycine betaine. Catalyzes the oxidation of choline to betaine aldehyde and betaine aldehyde to glycine betaine at the same rate. This is Oxygen-dependent choline dehydrogenase from Ectopseudomonas mendocina (strain ymp) (Pseudomonas mendocina).